A 205-amino-acid chain; its full sequence is Cytochrome c biogenesis ATP-binding export protein CcmA (205 aa).

An ABC transporter domain is found at 2–204 (LEVSNLTAIR…SPKLRKIKLG (203 aa)). 34-41 (GRNGTGKT) contributes to the ATP binding site.

Belongs to the ABC transporter superfamily. CcmA exporter (TC 3.A.1.107) family. As to quaternary structure, the complex is composed of two ATP-binding proteins (CcmA) and two transmembrane proteins (CcmB).

Its subcellular location is the cell inner membrane. It catalyses the reaction heme b(in) + ATP + H2O = heme b(out) + ADP + phosphate + H(+). Part of the ABC transporter complex CcmAB involved in the biogenesis of c-type cytochromes; once thought to export heme, this seems not to be the case, but its exact role is uncertain. Responsible for energy coupling to the transport system. This chain is Cytochrome c biogenesis ATP-binding export protein CcmA, found in Vibrio vulnificus (strain CMCP6).